The chain runs to 167 residues: Protein YfbM (167 aa).

In terms of assembly, monomer.

This chain is Protein YfbM (yfbM), found in Escherichia coli (strain K12).